A 328-amino-acid polypeptide reads, in one-letter code: Tyrosine recombinase XerC (328 aa).

The region spanning Q13 to A100 is the Core-binding (CB) domain. Residues R122 to D319 enclose the Tyr recombinase domain. Catalysis depends on residues R162, K197, H271, R274, and H297. The active-site O-(3'-phospho-DNA)-tyrosine intermediate is the Y306.

The protein belongs to the 'phage' integrase family. XerC subfamily. In terms of assembly, forms a cyclic heterotetrameric complex composed of two molecules of XerC and two molecules of XerD.

The protein resides in the cytoplasm. In terms of biological role, site-specific tyrosine recombinase, which acts by catalyzing the cutting and rejoining of the recombining DNA molecules. The XerC-XerD complex is essential to convert dimers of the bacterial chromosome into monomers to permit their segregation at cell division. It also contributes to the segregational stability of plasmids. In Ralstonia pickettii (strain 12J), this protein is Tyrosine recombinase XerC.